We begin with the raw amino-acid sequence, 786 residues long: Endonuclease MutS2 (786 aa).

An ATP-binding site is contributed by 335-342 (GPNTGGKT). The Smr domain occupies 711-786 (LDLRGERFEN…GLGVTVVELK (76 aa)).

Belongs to the DNA mismatch repair MutS family. MutS2 subfamily. As to quaternary structure, homodimer. Binds to stalled ribosomes, contacting rRNA.

Functionally, endonuclease that is involved in the suppression of homologous recombination and thus may have a key role in the control of bacterial genetic diversity. Its function is as follows. Acts as a ribosome collision sensor, splitting the ribosome into its 2 subunits. Detects stalled/collided 70S ribosomes which it binds and splits by an ATP-hydrolysis driven conformational change. Acts upstream of the ribosome quality control system (RQC), a ribosome-associated complex that mediates the extraction of incompletely synthesized nascent chains from stalled ribosomes and their subsequent degradation. Probably generates substrates for RQC. This Bacillus thuringiensis (strain Al Hakam) protein is Endonuclease MutS2.